Consider the following 170-residue polypeptide: RNA pyrophosphohydrolase (170 aa).

A Nudix hydrolase domain is found at 6–149 (GFRPNVGIIL…KRDVYRRALK (144 aa)). Residues 39–60 (GGIKHNESPENALYRELEEEVG) carry the Nudix box motif.

The protein belongs to the Nudix hydrolase family. RppH subfamily. A divalent metal cation serves as cofactor.

Accelerates the degradation of transcripts by removing pyrophosphate from the 5'-end of triphosphorylated RNA, leading to a more labile monophosphorylated state that can stimulate subsequent ribonuclease cleavage. The sequence is that of RNA pyrophosphohydrolase from Saccharophagus degradans (strain 2-40 / ATCC 43961 / DSM 17024).